The chain runs to 968 residues: RNA polymerase-associated protein RapA (968 aa).

The region spanning 164–334 is the Helicase ATP-binding domain; sequence DVGRRHAPRV…FARLRLLDPN (171 aa). Residue 177–184 participates in ATP binding; that stretch reads DEVGLGKT. Residues 280 to 283 carry the DEAH box motif; that stretch reads DEAH. The 173-residue stretch at 490–662 folds into the Helicase C-terminal domain; it reads RVEWLMGYLT…YLASPDQTEG (173 aa).

This sequence belongs to the SNF2/RAD54 helicase family. RapA subfamily. Interacts with the RNAP. Has a higher affinity for the core RNAP than for the holoenzyme. Its ATPase activity is stimulated by binding to RNAP.

Its function is as follows. Transcription regulator that activates transcription by stimulating RNA polymerase (RNAP) recycling in case of stress conditions such as supercoiled DNA or high salt concentrations. Probably acts by releasing the RNAP, when it is trapped or immobilized on tightly supercoiled DNA. Does not activate transcription on linear DNA. Probably not involved in DNA repair. The sequence is that of RNA polymerase-associated protein RapA from Escherichia coli O1:K1 / APEC.